The primary structure comprises 494 residues: NAD(P)H-quinone oxidoreductase subunit 2 B, chloroplastic (494 aa).

Transmembrane regions (helical) follow at residues 13–33 (SILP…IDLI), 39–59 (TPWL…ILLF), 81–101 (IFRL…IDYI), 107–127 (ALTE…FLCC), 131–151 (LVTI…LSGY), 166–186 (LLMG…LYGL), 211–231 (MFIS…LVPF), 243–263 (PTPV…ALAT), 277–297 (WHLL…FIAV), 305–325 (MLAY…IAAE), 336–356 (YMLI…LFGL), 378–398 (LSLV…GFFG), 411–433 (LYFL…LKII), and 468–488 (MIIC…IIAI).

Belongs to the complex I subunit 2 family. In terms of assembly, NDH is composed of at least 16 different subunits, 5 of which are encoded in the nucleus.

The protein localises to the plastid. Its subcellular location is the chloroplast thylakoid membrane. It catalyses the reaction a plastoquinone + NADH + (n+1) H(+)(in) = a plastoquinol + NAD(+) + n H(+)(out). It carries out the reaction a plastoquinone + NADPH + (n+1) H(+)(in) = a plastoquinol + NADP(+) + n H(+)(out). Functionally, NDH shuttles electrons from NAD(P)H:plastoquinone, via FMN and iron-sulfur (Fe-S) centers, to quinones in the photosynthetic chain and possibly in a chloroplast respiratory chain. The immediate electron acceptor for the enzyme in this species is believed to be plastoquinone. Couples the redox reaction to proton translocation, and thus conserves the redox energy in a proton gradient. The polypeptide is NAD(P)H-quinone oxidoreductase subunit 2 B, chloroplastic (Angiopteris evecta (Mule's foot fern)).